The chain runs to 54 residues: Large ribosomal subunit protein bL32c (54 aa).

It belongs to the bacterial ribosomal protein bL32 family.

It localises to the plastid. The protein localises to the chloroplast. In Panax ginseng (Korean ginseng), this protein is Large ribosomal subunit protein bL32c.